We begin with the raw amino-acid sequence, 320 residues long: Zinc finger protein 330 (320 aa).

The segment at methionine 1–arginine 23 is disordered. The Nuclear localization signal signature appears at lysine 3–lysine 11. Basic and acidic residues predominate over residues lysine 10–leucine 22. C4-type zinc fingers lie at residues cysteine 42–cysteine 58, cysteine 67–cysteine 104, cysteine 129–cysteine 149, and cysteine 175–cysteine 189. A disordered region spans residues glutamate 206–asparagine 320. The span at cysteine 216–aspartate 225 shows a compositional bias: basic and acidic residues. Residues aspartate 269–aspartate 285 are compositionally biased toward acidic residues. Position 291 is a phosphoserine (serine 291).

It belongs to the NOA36 family. Widely expressed. Higher expression seen in heart and skeletal muscle.

Its subcellular location is the nucleus. It localises to the nucleolus. The protein localises to the chromosome. The protein resides in the centromere. This is Zinc finger protein 330 (ZNF330) from Homo sapiens (Human).